The following is a 146-amino-acid chain: UPF0178 protein Helmi_09130 (146 aa).

The protein belongs to the UPF0178 family.

The protein is UPF0178 protein Helmi_09130 of Heliobacterium modesticaldum (strain ATCC 51547 / Ice1).